Here is a 336-residue protein sequence, read N- to C-terminus: Opsin-1, short-wave-sensitive 1 (336 aa).

Residues 1-29 (MDAWAVQFGNASKVSPFEGEQYHIAPKWA) are Extracellular-facing. An N-linked (GlcNAc...) asparagine glycan is attached at asparagine 10. Residues 30-54 (FYLQAAFMGFVFIVGTPMNGIVLFV) form a helical membrane-spanning segment. Over 55 to 66 (TMKYKKLRQPLN) the chain is Cytoplasmic. Residues 67-91 (YILVNISLAGFIFDTFSVSQVFVCA) form a helical membrane-spanning segment. Over 92-106 (ARGYYFLGYTLCAME) the chain is Extracellular. Cysteine 103 and cysteine 180 are disulfide-bonded. Residues 107–126 (AAMGSIAGLVTGWSLAVLAF) traverse the membrane as a helical segment. Residues 127–145 (ERYVVICKPFGSFKFGQGQ) lie on the Cytoplasmic side of the membrane. A helical transmembrane segment spans residues 146–169 (AVGAVVFTWIIGTACATPPFFGWS). Residues 170 to 195 (RYIPEGLGTACGPDWYTKSEEYNSES) are Extracellular-facing. A helical transmembrane segment spans residues 196–223 (YTYFLLITCFMMPMTIIIFSYSQLLGAL). The Cytoplasmic segment spans residues 224-245 (RAVAAQQAESESTQKAEREVSR). The helical transmembrane segment at 246–269 (MVVVMVGSFVLCYAPYAVTAMYFA) threads the bilayer. Residues 270-277 (NSDEPNKD) are Extracellular-facing. A helical membrane pass occupies residues 278 to 302 (YRLVAIPAFFSKSSCVYNPLIYAFM). Lysine 289 is subject to N6-(retinylidene)lysine. The Cytoplasmic segment spans residues 303–336 (NKQFNACIMETVFGKKIDESSEVSSKTETSSVSA).

It belongs to the G-protein coupled receptor 1 family. Opsin subfamily. In terms of processing, phosphorylated on some or all of the serine and threonine residues present in the C-terminal region. In terms of tissue distribution, retinal short single cones, outer and inner segments.

The protein localises to the membrane. Functionally, visual pigments are the light-absorbing molecules that mediate vision. They consist of an apoprotein, opsin, covalently linked to cis-retinal. This Danio rerio (Zebrafish) protein is Opsin-1, short-wave-sensitive 1 (opn1sw1).